The chain runs to 663 residues: DNA ligase (663 aa).

NAD(+)-binding positions include 31 to 35, 80 to 81, and E109; these read DSEYD and SL. K111 functions as the N6-AMP-lysine intermediate in the catalytic mechanism. Residues R132, E166, K282, and K306 each coordinate NAD(+). The Zn(2+) site is built by C400, C403, C418, and C423. The region spanning 585–663 is the BRCT domain; it reads ELHPVFGEKT…EQMMVDALRN (79 aa).

The protein belongs to the NAD-dependent DNA ligase family. LigA subfamily. The cofactor is Mg(2+). Mn(2+) serves as cofactor.

It carries out the reaction NAD(+) + (deoxyribonucleotide)n-3'-hydroxyl + 5'-phospho-(deoxyribonucleotide)m = (deoxyribonucleotide)n+m + AMP + beta-nicotinamide D-nucleotide.. Its function is as follows. DNA ligase that catalyzes the formation of phosphodiester linkages between 5'-phosphoryl and 3'-hydroxyl groups in double-stranded DNA using NAD as a coenzyme and as the energy source for the reaction. It is essential for DNA replication and repair of damaged DNA. The polypeptide is DNA ligase (Macrococcus caseolyticus (strain JCSC5402) (Macrococcoides caseolyticum)).